A 473-amino-acid chain; its full sequence is Cysteine--tRNA ligase (473 aa).

C28 contributes to the Zn(2+) binding site. Positions 30–40 (VTVYDLCHLGH) match the 'HIGH' region motif. Positions 213, 238, and 242 each coordinate Zn(2+). The 'KMSKS' region motif lies at 270-274 (KMSKS). An ATP-binding site is contributed by K273.

This sequence belongs to the class-I aminoacyl-tRNA synthetase family. As to quaternary structure, monomer. Zn(2+) serves as cofactor.

The protein localises to the cytoplasm. The catalysed reaction is tRNA(Cys) + L-cysteine + ATP = L-cysteinyl-tRNA(Cys) + AMP + diphosphate. The protein is Cysteine--tRNA ligase of Blochmanniella pennsylvanica (strain BPEN).